The chain runs to 354 residues: MQGLLFSTLLLAGLAQFCCRVQGTGPLDTTPEGRPGEVSDAPQRKQFCHWPCKCPQQKPRCPPGVSLVRDGCGCCKICAKQPGEICNEADLCDPHKGLYCDYSVDRPRYETGVCAYLVAVGCEFNQVHYHNGQVFQPNPLFSCLCVSGAIGCTPLFIPKLAGSHCSGAKGGKKSDQSNCSLEPLLQQLSTSYKTMPAYRNLPLIWKKKCLVQATKWTPCSRTCGMGISNRVTNENSNCEMRKEKRLCYIQPCDSNILKTIKIPKGKTCQPTFQLSKAEKFVFSGCSSTQSYKPTFCGICLDKRCCIPNKSKMITIQFDCPNEGSFKWKMLWITSCVCQRNCREPGDIFSELKIL.

Positions 1-23 are cleaved as a signal peptide; sequence MQGLLFSTLLLAGLAQFCCRVQG. Residues 44–117 enclose the IGFBP N-terminal domain; sequence RKQFCHWPCK…RYETGVCAYL (74 aa). 6 disulfides stabilise this stretch: Cys-48-Cys-72, Cys-52-Cys-74, Cys-54-Cys-75, Cys-61-Cys-78, Cys-86-Cys-100, and Cys-92-Cys-114. Asn-178 carries N-linked (GlcNAc...) asparagine glycosylation. In terms of domain architecture, TSP type-1 spans 208–253; sequence KCLVQATKWTPCSRTCGMGISNRVTNENSNCEMRKEKRLCYIQPCD. 5 disulfides stabilise this stretch: Cys-268–Cys-305, Cys-285–Cys-319, Cys-296–Cys-335, Cys-299–Cys-337, and Cys-304–Cys-341. The CTCK domain maps to 268 to 342; it reads CQPTFQLSKA…TSCVCQRNCR (75 aa). A glycan (N-linked (GlcNAc...) asparagine) is linked at Asn-308.

It belongs to the CCN family. As to expression, predominant expression in adult kidney and testis and fetal kidney. Weaker expression found in placenta, ovary, prostate and small intestine. Also expressed in skeletally-derived cells such as synoviocytes and articular cartilage chondrocytes.

The protein localises to the secreted. It localises to the mitochondrion. In terms of biological role, plays a role in mitochondrial electron transport and mitochondrial respiration. Through its regulation of the mitochondrial function may play a role in normal postnatal skeletal growth and cartilage homeostasis. The sequence is that of Cellular communication network factor 6 from Homo sapiens (Human).